Here is an 85-residue protein sequence, read N- to C-terminus: Alpha-defensin 11 (85 aa).

Residues 1–11 (ALVLLAFQVQA) form the signal peptide. Positions 12–50 (DPIQNTDEETKTEEQPGEEDQAVSVSFGDPEGTSLQEES) are excised as a propeptide. A disordered region spans residues 14-46 (IQNTDEETKTEEQPGEEDQAVSVSFGDPEGTSL). Cystine bridges form between Cys56/Cys84, Cys58/Cys73, and Cys63/Cys83.

This sequence belongs to the alpha-defensin family. Paneth cells of the small bowel.

It is found in the secreted. In terms of biological role, probably contributes to the antimicrobial barrier function of the small bowel mucosa. The sequence is that of Alpha-defensin 11 (Defa11) from Mus musculus (Mouse).